Consider the following 473-residue polypeptide: Serine palmitoyltransferase 1 (473 aa).

The Lumenal segment spans residues 1–15 (MATVAEQWVLVEMVQ). An interaction with SPTLC2 region spans residues 1–66 (MATVAEQWVL…KEELIEEWQP (66 aa)). A helical transmembrane segment spans residues 16-36 (ALYEAPAYHLILEGILILWII). Residues 37–473 (RLVFSKTYKL…IREAAQAVLL (437 aa)) lie on the Cytoplasmic side of the membrane. At Tyr164 the chain carries Phosphotyrosine; by ABL.

It belongs to the class-II pyridoxal-phosphate-dependent aminotransferase family. As to quaternary structure, component of the serine palmitoyltransferase (SPT) complex, which is also composed of SPTLC2 or SPTLC3 and SPTSSA or SPTSSB. The heterodimer with SPTLC2 or SPTLC3 forms the catalytic core of the enzyme, while SPTSSA or SPTSSB subunits determine substrate specificity. SPT also interacts with ORMDL proteins, especially ORMDL3, which negatively regulate SPT activity in the presence of ceramides. Forms dimers of heterodimers with SPTLC2. Interacts with RTN4 (isoform B). Pyridoxal 5'-phosphate serves as cofactor. Phosphorylation at Tyr-164 inhibits activity and promotes cell survival. As to expression, expressed in a variety of tissues. Highest expression in brain, kidney and liver. Expressed in brown and white adipose tissues.

It is found in the endoplasmic reticulum membrane. It carries out the reaction L-serine + hexadecanoyl-CoA + H(+) = 3-oxosphinganine + CO2 + CoA. It catalyses the reaction octadecanoyl-CoA + L-serine + H(+) = 3-oxoeicosasphinganine + CO2 + CoA. The catalysed reaction is tetradecanoyl-CoA + L-serine + H(+) = 3-oxohexadecasphinganine + CO2 + CoA. The enzyme catalyses dodecanoyl-CoA + L-serine + H(+) = 3-oxotetradecasphinganine + CO2 + CoA. It functions in the pathway lipid metabolism; sphingolipid metabolism. SPT complex catalytic activity is negatively regulated by ORMDL proteins, including ORMDL3, in the presence of ceramides. This mechanism allows to maintain ceramide levels at sufficient concentrations for the production of complex sphingolipids, but which prevents the accumulation of ceramides to levels that trigger apoptosis. In terms of biological role, component of the serine palmitoyltransferase multisubunit enzyme (SPT) that catalyzes the initial and rate-limiting step in sphingolipid biosynthesis by condensing L-serine and activated acyl-CoA (most commonly palmitoyl-CoA) to form long-chain bases. The SPT complex is also composed of SPTLC2 or SPTLC3 and SPTSSA or SPTSSB. Within this complex, the heterodimer with SPTLC2 or SPTLC3 forms the catalytic core. The composition of the serine palmitoyltransferase (SPT) complex determines the substrate preference. The SPTLC1-SPTLC2-SPTSSA complex shows a strong preference for C16-CoA substrate, while the SPTLC1-SPTLC3-SPTSSA isozyme uses both C14-CoA and C16-CoA as substrates, with a slight preference for C14-CoA. The SPTLC1-SPTLC2-SPTSSB complex shows a strong preference for C18-CoA substrate, while the SPTLC1-SPTLC3-SPTSSB isozyme displays an ability to use a broader range of acyl-CoAs, without apparent preference. Required for adipocyte cell viability and metabolic homeostasis. The sequence is that of Serine palmitoyltransferase 1 (Sptlc1) from Mus musculus (Mouse).